The following is a 328-amino-acid chain: Cell division protein ZipA (328 aa).

Over 1-4 (MDLN) the chain is Periplasmic. A helical transmembrane segment spans residues 5–25 (TILIIVGIVALVALIVHGLWS). The Cytoplasmic segment spans residues 26–328 (NRREKSKYFD…NAEQAYLARV (303 aa)). The segment at 43–82 (TSLTSRSHTQEEMAQPNNISPNTYVENGHTPIPQPTTEKV) is disordered. Positions 57-67 (QPNNISPNTYV) are enriched in polar residues.

This sequence belongs to the ZipA family. In terms of assembly, interacts with FtsZ via their C-terminal domains.

It is found in the cell inner membrane. Essential cell division protein that stabilizes the FtsZ protofilaments by cross-linking them and that serves as a cytoplasmic membrane anchor for the Z ring. Also required for the recruitment to the septal ring of downstream cell division proteins. This chain is Cell division protein ZipA, found in Haemophilus influenzae (strain PittEE).